The chain runs to 425 residues: Glutamate-1-semialdehyde 2,1-aminomutase (425 aa).

At Lys265 the chain carries N6-(pyridoxal phosphate)lysine.

This sequence belongs to the class-III pyridoxal-phosphate-dependent aminotransferase family. HemL subfamily. As to quaternary structure, homodimer. Pyridoxal 5'-phosphate is required as a cofactor.

It is found in the cytoplasm. It carries out the reaction (S)-4-amino-5-oxopentanoate = 5-aminolevulinate. The protein operates within porphyrin-containing compound metabolism; protoporphyrin-IX biosynthesis; 5-aminolevulinate from L-glutamyl-tRNA(Glu): step 2/2. The sequence is that of Glutamate-1-semialdehyde 2,1-aminomutase from Desulfatibacillum aliphaticivorans.